Consider the following 288-residue polypeptide: Phosphopantetheinyl transferase (288 aa).

CoA contacts are provided by residues Arg60, 99 to 104 (RTEMGK), and 118 to 121 (NLSH). Asp139 and Glu196 together coordinate Mg(2+). A CoA-binding site is contributed by 196–200 (EAYLK).

The protein belongs to the P-Pant transferase superfamily. AcpS family. In terms of assembly, monomer.

The protein localises to the cytoplasm. Its subcellular location is the cytosol. It catalyses the reaction apo-[ACP] + CoA = holo-[ACP] + adenosine 3',5'-bisphosphate + H(+). Its pathway is lipid metabolism; fatty acid biosynthesis. Functionally, phosphopantetheinyl transferase that is essential for attaching phosphopantetheine to ACP domains of the polyunsaturated fatty acid (PUFA) synthase converting the inactive apo-synthase to the active holo-synthase. In Thraustochytrium sp. (strain ATCC 26185 / S-3), this protein is Phosphopantetheinyl transferase.